Reading from the N-terminus, the 343-residue chain is tRNA N6-adenosine threonylcarbamoyltransferase (343 aa).

Histidine 116 and histidine 120 together coordinate Fe cation. Residues 138 to 142, aspartate 172, glycine 185, aspartate 189, and asparagine 277 each bind substrate; that span reads LVSGG. A Fe cation-binding site is contributed by aspartate 305.

This sequence belongs to the KAE1 / TsaD family. Requires Fe(2+) as cofactor.

The protein localises to the cytoplasm. It catalyses the reaction L-threonylcarbamoyladenylate + adenosine(37) in tRNA = N(6)-L-threonylcarbamoyladenosine(37) in tRNA + AMP + H(+). Its function is as follows. Required for the formation of a threonylcarbamoyl group on adenosine at position 37 (t(6)A37) in tRNAs that read codons beginning with adenine. Is involved in the transfer of the threonylcarbamoyl moiety of threonylcarbamoyl-AMP (TC-AMP) to the N6 group of A37, together with TsaE and TsaB. TsaD likely plays a direct catalytic role in this reaction. The sequence is that of tRNA N6-adenosine threonylcarbamoyltransferase from Mycobacterium ulcerans (strain Agy99).